An 85-amino-acid polypeptide reads, in one-letter code: Large ribosomal subunit protein bL27 (85 aa).

The tract at residues 1 to 24 (MAHKKAGGSSRNGRDSHSKRLGVK) is disordered.

The protein belongs to the bacterial ribosomal protein bL27 family.

The polypeptide is Large ribosomal subunit protein bL27 (Nitrosomonas eutropha (strain DSM 101675 / C91 / Nm57)).